A 479-amino-acid polypeptide reads, in one-letter code: tRNA-dihydrouridine(20) synthase [NAD(P)+] (479 aa).

FMN is bound by residues 14–16 (PMV) and Gln-87. Cys-116 (proton donor) is an active-site residue. Residues Lys-159, His-187, 221–223 (NGD), and 245–246 (AR) contribute to the FMN site.

The protein belongs to the Dus family. Dus2 subfamily. FMN serves as cofactor.

It localises to the cytoplasm. Its subcellular location is the nucleus. It catalyses the reaction 5,6-dihydrouridine(20) in tRNA + NADP(+) = uridine(20) in tRNA + NADPH + H(+). It carries out the reaction 5,6-dihydrouridine(20) in tRNA + NAD(+) = uridine(20) in tRNA + NADH + H(+). The enzyme catalyses a 5,6-dihydrouridine in mRNA + NAD(+) = a uridine in mRNA + NADH + H(+). The catalysed reaction is a 5,6-dihydrouridine in mRNA + NADP(+) = a uridine in mRNA + NADPH + H(+). Functionally, catalyzes the NADPH-dependent synthesis of dihydrouridine, a modified base found in the D-loop of most tRNAs. Specifically modifies U20 in cytoplasmic tRNAs. Also able to mediate dihydrouridylation of some mRNAs, thereby affecting their translation. The chain is tRNA-dihydrouridine(20) synthase [NAD(P)+] from Schizosaccharomyces pombe (strain 972 / ATCC 24843) (Fission yeast).